The primary structure comprises 250 residues: Replicating protein (250 aa).

Disordered regions lie at residues 1-23 and 168-250; these read MFQQ…PCEK and KAHM…KAFE. Composition is skewed to basic and acidic residues over residues 13-23 and 178-190; these read GTDEPAHPCEK and DRLR…RTRA. The span at 218-237 shows a compositional bias: polar residues; the sequence is SRCSFTTPNRPRRTLPSSHP.

Required for replication. It likely regulates pTAR copy number. The chain is Replicating protein (repA) from Rhizobium radiobacter (Agrobacterium tumefaciens).